Consider the following 220-residue polypeptide: N-(5'-phosphoribosyl)anthranilate isomerase (220 aa).

Belongs to the TrpF family.

The enzyme catalyses N-(5-phospho-beta-D-ribosyl)anthranilate = 1-(2-carboxyphenylamino)-1-deoxy-D-ribulose 5-phosphate. It functions in the pathway amino-acid biosynthesis; L-tryptophan biosynthesis; L-tryptophan from chorismate: step 3/5. This is N-(5'-phosphoribosyl)anthranilate isomerase from Bordetella petrii (strain ATCC BAA-461 / DSM 12804 / CCUG 43448).